A 61-amino-acid chain; its full sequence is Small ribosomal subunit protein uS14B (61 aa).

Cys-24, Cys-27, Cys-40, and Cys-43 together coordinate Zn(2+).

Belongs to the universal ribosomal protein uS14 family. Zinc-binding uS14 subfamily. Part of the 30S ribosomal subunit. Contacts proteins S3 and S10. Zn(2+) serves as cofactor.

Functionally, binds 16S rRNA, required for the assembly of 30S particles and may also be responsible for determining the conformation of the 16S rRNA at the A site. This is Small ribosomal subunit protein uS14B from Staphylococcus epidermidis (strain ATCC 35984 / DSM 28319 / BCRC 17069 / CCUG 31568 / BM 3577 / RP62A).